We begin with the raw amino-acid sequence, 98 residues long: Feather beta keratin (98 aa).

S2 carries the N-acetylserine modification.

It belongs to the avian keratin family. As to quaternary structure, the avian keratins (F-ker, S-ker, C-ker and B-ker) are a complex mixture of very similar polypeptides.

This is Feather beta keratin from Mycteria americana (Wood stork).